The following is a 498-amino-acid chain: MSKIRTRYAPSPTGYFHIGGARTALFNYLFAKHNNGEFIVRIEDTDIERNVEDGAENQLYNLKWLNIFADESIWNPTQSGPYRQSEKLEVYQKYAYQLLEEKKAYRCFCTPEELQKHREDLLKQYKPPIYSRKCFLLSEEQIHKNLADKIPFTIRLLLRDNKEYSWNDLIRGNLIFNTSSMSDPVILKSNQIATYNFAVVIDDHDMKISHILRGEEHISNTPYQLAIKEALGFKDEFVYGHLSIIVDETGKKLSKRNLAVEQFVEGFRKKGYLAEALVNFIALLGWSHPDNIEILDLPTLVKSFTIKNLSAAPSFFDIKKLNWISSEYIKNMDDVMYLAFIKPYVDLNEYDEIKTKVNEICLMFKNQLQYGYQINEIIKESFVPHVGLSNLDQADLDFLKSNPNYRQLLISFKEKINQLDQVNDHNVKEIINWLAHQIKLGDLVLEKPLGGKNLYMPLRIVLSNKKHGPELNKVIALYDKQTILKNLDDAINYLTNAK.

Positions 10–20 (PSPTGYFHIGG) match the 'HIGH' region motif. The 'KMSKS' region motif lies at 252 to 256 (KLSKR). Residue K255 coordinates ATP.

This sequence belongs to the class-I aminoacyl-tRNA synthetase family. Glutamate--tRNA ligase type 1 subfamily. As to quaternary structure, monomer.

Its subcellular location is the cytoplasm. The catalysed reaction is tRNA(Glu) + L-glutamate + ATP = L-glutamyl-tRNA(Glu) + AMP + diphosphate. Its function is as follows. Catalyzes the attachment of glutamate to tRNA(Glu) in a two-step reaction: glutamate is first activated by ATP to form Glu-AMP and then transferred to the acceptor end of tRNA(Glu). The chain is Glutamate--tRNA ligase from Mycoplasmoides gallisepticum (strain R(low / passage 15 / clone 2)) (Mycoplasma gallisepticum).